Consider the following 143-residue polypeptide: HTH-type transcriptional regulator BudR (143 aa).

Residues 1-58 enclose the HTH lysR-type domain; that stretch reads MELRYLRYFVAVARERHFTRAAKALGISQPPLSQQIKRLEEEVGTPLFRRLTRGVELT. The H-T-H motif DNA-binding region spans 18-37; the sequence is FTRAAKALGISQPPLSQQIK.

Belongs to the LysR transcriptional regulatory family.

Functionally, regulator of the budABC operon for 2,3-butanediol synthesis. The protein is HTH-type transcriptional regulator BudR (budR) of Klebsiella aerogenes (Enterobacter aerogenes).